A 601-amino-acid chain; its full sequence is Elongation factor 4 (601 aa).

The tr-type G domain occupies 6–188 (SHIRNFSIIA…QIVHRVPPPE (183 aa)). GTP-binding positions include 18-23 (DHGKST) and 135-138 (NKID).

This sequence belongs to the TRAFAC class translation factor GTPase superfamily. Classic translation factor GTPase family. LepA subfamily.

The protein resides in the cell inner membrane. The catalysed reaction is GTP + H2O = GDP + phosphate + H(+). Required for accurate and efficient protein synthesis under certain stress conditions. May act as a fidelity factor of the translation reaction, by catalyzing a one-codon backward translocation of tRNAs on improperly translocated ribosomes. Back-translocation proceeds from a post-translocation (POST) complex to a pre-translocation (PRE) complex, thus giving elongation factor G a second chance to translocate the tRNAs correctly. Binds to ribosomes in a GTP-dependent manner. This is Elongation factor 4 from Anaeromyxobacter dehalogenans (strain 2CP-C).